Here is a 92-residue protein sequence, read N- to C-terminus: Probable Fe(2+)-trafficking protein (92 aa).

Belongs to the Fe(2+)-trafficking protein family.

Its function is as follows. Could be a mediator in iron transactions between iron acquisition and iron-requiring processes, such as synthesis and/or repair of Fe-S clusters in biosynthetic enzymes. This chain is Probable Fe(2+)-trafficking protein, found in Xanthomonas campestris pv. campestris (strain 8004).